A 291-amino-acid chain; its full sequence is B-lymphocyte antigen CD20 (291 aa).

The Cytoplasmic segment spans residues 1-44 (MSGPFPAEPTKGPLAMQPAPKVNLKRTSSLVGPTQSFFMRESKA). Ser-29 carries the post-translational modification Phosphoserine. Residues 45-65 (LGAVQIMNGLFHITLGGLLMI) form a helical membrane-spanning segment. At 66–68 (PTG) the chain is on the extracellular side. Residues 69 to 89 (VFAPICLSVWYPLWGGIMYII) form a helical membrane-spanning segment. The Cytoplasmic portion of the chain corresponds to 90–111 (SGSLLAAAAEKTSRKSLVKAKV). A helical transmembrane segment spans residues 112–132 (IMSSLSLFAAISGIILSIMDI). Topologically, residues 133-182 (LNMTLSHFLKMRRLELIQTSKPYVDIYDCEPSNSSEKNSPSTQYCNSIQS) are extracellular. Residues 183-203 (VFLGILSAMLISAFFQKLVTA) traverse the membrane as a helical segment. Over 204–291 (GIVENEWKRM…SLPVENEIAP (88 aa)) the chain is Cytoplasmic. The S-palmitoyl cysteine moiety is linked to residue Cys-214. Ser-219 carries the phosphoserine modification. At Thr-233 the chain carries Phosphothreonine. Positions 261-270 (VQEEEEEEAE) are enriched in acidic residues. A disordered region spans residues 261–291 (VQEEEEEEAEINFPAPPQEQESLPVENEIAP).

This sequence belongs to the MS4A family. Forms homotetramers. Interacts with the heavy and light chains of cell surface IgM, the antigen-binding components of the BCR. Phosphorylated.

It is found in the cell membrane. Its function is as follows. B-lymphocyte-specific membrane protein that plays a role in the regulation of cellular calcium influx necessary for the development, differentiation, and activation of B-lymphocytes. Functions as a store-operated calcium (SOC) channel component promoting calcium influx after activation by the B-cell receptor/BCR. The sequence is that of B-lymphocyte antigen CD20 (Ms4a1) from Mus musculus (Mouse).